The following is a 64-amino-acid chain: Large ribosomal subunit protein bL28 (64 aa).

This sequence belongs to the bacterial ribosomal protein bL28 family.

This chain is Large ribosomal subunit protein bL28, found in Persephonella marina (strain DSM 14350 / EX-H1).